Consider the following 171-residue polypeptide: UPF0098 protein aq_1250 (171 aa).

Belongs to the UPF0098 family.

The polypeptide is UPF0098 protein aq_1250 (Aquifex aeolicus (strain VF5)).